The sequence spans 62 residues: Photosystem II reaction center protein Z (62 aa).

The next 2 helical transmembrane spans lie at 8–28 (LVSI…VILV) and 41–61 (YASA…NSFV).

This sequence belongs to the PsbZ family. In terms of assembly, PSII is composed of 1 copy each of membrane proteins PsbA, PsbB, PsbC, PsbD, PsbE, PsbF, PsbH, PsbI, PsbJ, PsbK, PsbL, PsbM, PsbT, PsbX, PsbY, PsbZ, Psb30/Ycf12, at least 3 peripheral proteins of the oxygen-evolving complex and a large number of cofactors. It forms dimeric complexes.

Its subcellular location is the plastid. It localises to the chloroplast thylakoid membrane. In terms of biological role, may control the interaction of photosystem II (PSII) cores with the light-harvesting antenna, regulates electron flow through the 2 photosystem reaction centers. PSII is a light-driven water plastoquinone oxidoreductase, using light energy to abstract electrons from H(2)O, generating a proton gradient subsequently used for ATP formation. In Guillardia theta (Cryptophyte), this protein is Photosystem II reaction center protein Z.